A 129-amino-acid polypeptide reads, in one-letter code: L-ectoine synthase (129 aa).

Belongs to the ectoine synthase family.

It carries out the reaction (2S)-4-acetamido-2-aminobutanoate = L-ectoine + H2O. The protein operates within amine and polyamine biosynthesis; ectoine biosynthesis; L-ectoine from L-aspartate 4-semialdehyde: step 3/3. Catalyzes the circularization of gamma-N-acetyl-alpha,gamma-diaminobutyric acid (ADABA) to ectoine (1,4,5,6-tetrahydro-2-methyl-4-pyrimidine carboxylic acid), which is an excellent osmoprotectant. The sequence is that of L-ectoine synthase from Halalkalibacterium halodurans (strain ATCC BAA-125 / DSM 18197 / FERM 7344 / JCM 9153 / C-125) (Bacillus halodurans).